The following is a 348-amino-acid chain: MTAYEELRTKLVLAPKRWLITGVAGFIGSGLLEELLFLNQTVIGLDNFSTGYQHNLDDVRTSVSEEQWSRFIFIQGDIRKFTDCQKACKNVDYVLHQAALGSVPRSLKDPIATNSANIDGFLNMLTAARDAHVSSFTYAASSSTYGDHPDLPKIEERIGRPLSPYAVTKYVNELYADVFARSYEFNAIGLRYFNVFGRRQNPNGAYSAVIPRWILSLLKDEPIYINGDGSTSRDFCYIENVIQANLLSATTNDLASKNKVYNVAVGDRTSLNELYYLIRDGLNLWRNEQSRAEPIYKDFRDGDVKHSQADITKIKTFLSYEPEFDIKEGLKQTLKWYIDKHSTLYSSV.

NAD(+)-binding residues include Phe26, Ile27, Asp46, Thr50, Gly51, Asp77, Ile78, Gln97, Tyr165, Lys169, and Val195. Tyr165 acts as the Proton acceptor in catalysis.

It belongs to the NAD(P)-dependent epimerase/dehydratase family. In terms of assembly, homodimer. It depends on NAD(+) as a cofactor.

The catalysed reaction is UDP-2-acetamido-2-deoxy-alpha-D-glucuronate = UDP-2-acetamido-2-deoxy-alpha-D-galacturonate. The enzyme catalyses UDP-N-acetyl-alpha-D-glucosamine = UDP-N-acetyl-alpha-D-galactosamine. The protein operates within capsule biogenesis; capsule polysaccharide biosynthesis. It functions in the pathway glycan metabolism; Vi-antigen biosynthesis. Functionally, epimerase required for the biosynthesis of the capsular polysaccharide, commonly referred as the Vi antigen, an important virulence factor. Catalyzes the reversible epimerization of UDP-N-acetylglucosaminuronic acid (UDP-GlcNAcA) to UDP-N-acetylgalactosaminuronic acid (UDP-GalNAcA). Also catalyzes, with lower efficiency, the reversible epimerization of UDP-N-acetylglucosamine (UDP-GlcNAc) to UDP-N-acetylgalactosamine (UDP-GalNAc). Cannot use UDP-glucose (UDP-Glc) and UDP-galactose (UDP-Gal) as substrates. The chain is UDP-N-acetyl-alpha-D-glucosaminouronate 4-epimerase from Salmonella typhi.